The primary structure comprises 89 residues: Elongation factor 1-beta (89 aa).

The protein belongs to the EF-1-beta/EF-1-delta family.

Its function is as follows. Promotes the exchange of GDP for GTP in EF-1-alpha/GDP, thus allowing the regeneration of EF-1-alpha/GTP that could then be used to form the ternary complex EF-1-alpha/GTP/AAtRNA. This Methanocella arvoryzae (strain DSM 22066 / NBRC 105507 / MRE50) protein is Elongation factor 1-beta.